The following is a 284-amino-acid chain: MIADSSVLKKHTAIKRSTRIISLTLVLLGVFSFLLLTWNDSLEFYNSADPSENKKNSEEESEKKFVYKLPNLLKTADSFLSNENELNFQKVKEEISNIQSEVEVDIPEPSSKATSKFSSRSFQTDNVVTATTTTTLNPRSSSLALQKNCDHKKFDPRTDFLDIIRTSPAVLFIKSSQADSIFLKNLLQREFEISPELATVDLEKHSHGYELEKYIKQNKLNIDTSAALESIQSPYLFLNGISVINRGMVRDIIEPHSKGLLLPLLKSEARGNLLVEKKDIPSNS.

Residues Ile-20–Trp-38 traverse the membrane as a helical segment. Residues Arg-157–Asn-272 enclose the Glutaredoxin domain.

The protein localises to the membrane. This chain is Pheromone-regulated membrane protein 4 (PRM4), found in Saccharomyces cerevisiae (strain ATCC 204508 / S288c) (Baker's yeast).